Consider the following 373-residue polypeptide: Securin (373 aa).

Residues Met-1 to Asn-10 are compositionally biased toward basic and acidic residues. The tract at residues Met-1–Thr-27 is disordered. A compositionally biased stretch (polar residues) spans Ile-12–Gln-26. Positions Arg-85–Leu-88 match the D-box motif. The segment at Ala-177–Pro-278 is disordered. 4 positions are modified to phosphoserine: Ser-185, Ser-186, Ser-212, and Ser-213. Acidic residues predominate over residues Ser-185 to Asp-194. Positions Leu-225 to Leu-235 are enriched in low complexity. Basic and acidic residues predominate over residues Thr-240–Asp-256. Position 277 is a phosphoserine (Ser-277). Phosphoserine; by CDC28 is present on Ser-292.

This sequence belongs to the securin family. As to quaternary structure, interacts with the caspase-like ESP1, and prevents its protease activity probably by covering its active site. Interacts with CDC20. In terms of processing, phosphorylated by CDC28. The phosphorylation may be important for ESP1 localization to the nucleus. Post-translationally, ubiquitinated by the anaphase promoting complex (APC) at the onset of anaphase, conducting to its degradation.

Its subcellular location is the cytoplasm. It is found in the nucleus. In terms of biological role, regulatory protein, which plays a central role in chromosome stability. Probably acts by blocking the action of key proteins. During the mitosis, it blocks Separase/ESP1 function, preventing the proteolysis of the cohesin complex and the subsequent segregation of the chromosomes. At the onset of anaphase, it is ubiquitinated, conducting to its destruction and to the liberation of ESP1. In Saccharomyces cerevisiae (strain ATCC 204508 / S288c) (Baker's yeast), this protein is Securin (PDS1).